Consider the following 216-residue polypeptide: Adenylate kinase (216 aa).

ATP is bound at residue 13-18 (GAGKGT). An NMP region spans residues 33–66 (TTGDALRANKTKDITHLDVEYDTPGAYMDAGELV). AMP-binding positions include Thr34, Arg39, 64-66 (ELV), 89-92 (GYPR), and Gln96. The segment at 125 to 162 (GRRVCEDCGATFHVSFNQPETEGVCDACGGSLYQREDD) is LID. Position 126 (Arg126) interacts with ATP. Cys129 and Cys132 together coordinate Zn(2+). 135–136 (TF) contributes to the ATP binding site. Zn(2+)-binding residues include Cys149 and Cys152. Residues Arg159 and Arg170 each coordinate AMP. Arg198 is a binding site for ATP.

The protein belongs to the adenylate kinase family. As to quaternary structure, monomer.

It localises to the cytoplasm. The enzyme catalyses AMP + ATP = 2 ADP. The protein operates within purine metabolism; AMP biosynthesis via salvage pathway; AMP from ADP: step 1/1. Its function is as follows. Catalyzes the reversible transfer of the terminal phosphate group between ATP and AMP. Plays an important role in cellular energy homeostasis and in adenine nucleotide metabolism. In Halobacterium salinarum (strain ATCC 700922 / JCM 11081 / NRC-1) (Halobacterium halobium), this protein is Adenylate kinase.